The sequence spans 371 residues: MLDISLIMLGAGNSSRFELPVKKQWLRIGSDPLWLAATKNLSEFYTFKDIIVVSKECEYMARFAPHYKFVTGGDTRQQSLKNALNLVSSQFVLVSDIARPCITHELFSKIIEGSKQANCVVPALKIADTAYFGDEVIDRDKIKLIQTPQLSKTNLLKQALETDTLYTDDSSAMRAVGASVWHVLGDERAHKITTKSDLAKIPCLIPPSNEHFTGIGFDAHEFERGRELWLCGEKIEYEFGLKAHSDGDVALHALTDAILGAAGLGDIGELFPDTDAEFKGISSLLLLQEAYKKVQSVGFELVNADITIMAERPKISKFKRKMEANIAGALNLAPNRINVKATTTEKLGFVGRGEGIAVIASANLKYYDWTK.

A 2-C-methyl-D-erythritol 4-phosphate cytidylyltransferase region spans residues 1–212 (MLDISLIMLG…CLIPPSNEHF (212 aa)). The segment at 212 to 371 (FTGIGFDAHE…ANLKYYDWTK (160 aa)) is 2-C-methyl-D-erythritol 2,4-cyclodiphosphate synthase. A divalent metal cation contacts are provided by aspartate 218 and histidine 220. 4-CDP-2-C-methyl-D-erythritol 2-phosphate-binding positions include 218 to 220 (DAH) and 244 to 245 (HS). Histidine 252 contacts a divalent metal cation. 4-CDP-2-C-methyl-D-erythritol 2-phosphate is bound by residues 266–268 (DIG), 271–275 (FPDTD), 342–345 (TTTE), phenylalanine 349, and arginine 352.

This sequence in the N-terminal section; belongs to the IspD/TarI cytidylyltransferase family. IspD subfamily. The protein in the C-terminal section; belongs to the IspF family. Requires a divalent metal cation as cofactor.

It catalyses the reaction 2-C-methyl-D-erythritol 4-phosphate + CTP + H(+) = 4-CDP-2-C-methyl-D-erythritol + diphosphate. The catalysed reaction is 4-CDP-2-C-methyl-D-erythritol 2-phosphate = 2-C-methyl-D-erythritol 2,4-cyclic diphosphate + CMP. The protein operates within isoprenoid biosynthesis; isopentenyl diphosphate biosynthesis via DXP pathway; isopentenyl diphosphate from 1-deoxy-D-xylulose 5-phosphate: step 2/6. It participates in isoprenoid biosynthesis; isopentenyl diphosphate biosynthesis via DXP pathway; isopentenyl diphosphate from 1-deoxy-D-xylulose 5-phosphate: step 4/6. In terms of biological role, bifunctional enzyme that catalyzes the formation of 4-diphosphocytidyl-2-C-methyl-D-erythritol from CTP and 2-C-methyl-D-erythritol 4-phosphate (MEP) (IspD), and catalyzes the conversion of 4-diphosphocytidyl-2-C-methyl-D-erythritol 2-phosphate (CDP-ME2P) to 2-C-methyl-D-erythritol 2,4-cyclodiphosphate (ME-CPP) with a corresponding release of cytidine 5-monophosphate (CMP) (IspF). This Campylobacter curvus (strain 525.92) protein is Bifunctional enzyme IspD/IspF.